The chain runs to 224 residues: Processed variable antigen (224 aa).

Repeat copies occupy residues 1-6, 7-12, 13-18, 19-24, 25-30, 31-36, 37-42, 43-48, 49-54, 55-60, 61-66, 67-72, 73-78, 79-84, 85-90, 91-96, and 97-102. The tract at residues 1–102 is 17 X 6 AA tandem repeats of E-T-G-E-S-K; that stretch reads ETGESKETGE…GESKETGESK (102 aa). The span at 1–137 shows a compositional bias: basic and acidic residues; that stretch reads ETGESKETGE…TEESKDREGN (137 aa). The tract at residues 1-224 is disordered; the sequence is ETGESKETGE…KKADNKKKKK (224 aa). Residues 144–153 show a composition bias toward low complexity; it reads ENSENSNVTS. 2 stretches are compositionally biased toward basic and acidic residues: residues 156–173 and 185–217; these read EETKKLAEKEENEGEKLG and EDPKKLTEQEENGTKESSEETKDDKPEENEKKA.

The polypeptide is Processed variable antigen (Plasmodium falciparum).